A 135-amino-acid chain; its full sequence is M-zodatoxin-Lt8q (135 aa).

Residues 1–20 (MKYFVVALALVAAFACIAES) form the signal peptide. Residues 21-60 (KPAESEHELAEVEEENELADLEDAVWLEHLADLSDLEEAR) constitute a propeptide that is removed on maturation.

It belongs to the cationic peptide 06 (cytoinsectotoxin) family. In terms of tissue distribution, expressed by the venom gland.

It localises to the secreted. Its function is as follows. Insecticidal, cytolytic and antimicrobial peptide. Forms voltage-dependent, ion-permeable channels in membranes. At high concentration causes cell membrane lysis. The sequence is that of M-zodatoxin-Lt8q (cit 1-16) from Lachesana tarabaevi (Spider).